Reading from the N-terminus, the 455-residue chain is Probable glycine dehydrogenase (decarboxylating) subunit 1 (455 aa).

Belongs to the GcvP family. N-terminal subunit subfamily. As to quaternary structure, the glycine cleavage system is composed of four proteins: P, T, L and H. In this organism, the P 'protein' is a heterodimer of two subunits.

It carries out the reaction N(6)-[(R)-lipoyl]-L-lysyl-[glycine-cleavage complex H protein] + glycine + H(+) = N(6)-[(R)-S(8)-aminomethyldihydrolipoyl]-L-lysyl-[glycine-cleavage complex H protein] + CO2. The glycine cleavage system catalyzes the degradation of glycine. The P protein binds the alpha-amino group of glycine through its pyridoxal phosphate cofactor; CO(2) is released and the remaining methylamine moiety is then transferred to the lipoamide cofactor of the H protein. The sequence is that of Probable glycine dehydrogenase (decarboxylating) subunit 1 from Francisella tularensis subsp. holarctica (strain FTNF002-00 / FTA).